Consider the following 274-residue polypeptide: Acyl-[acyl-carrier-protein]--UDP-N-acetylglucosamine O-acyltransferase (274 aa).

It belongs to the transferase hexapeptide repeat family. LpxA subfamily. As to quaternary structure, homotrimer.

The protein localises to the cytoplasm. It catalyses the reaction a (3R)-hydroxyacyl-[ACP] + UDP-N-acetyl-alpha-D-glucosamine = a UDP-3-O-[(3R)-3-hydroxyacyl]-N-acetyl-alpha-D-glucosamine + holo-[ACP]. Its pathway is glycolipid biosynthesis; lipid IV(A) biosynthesis; lipid IV(A) from (3R)-3-hydroxytetradecanoyl-[acyl-carrier-protein] and UDP-N-acetyl-alpha-D-glucosamine: step 1/6. Its function is as follows. Involved in the biosynthesis of lipid A, a phosphorylated glycolipid that anchors the lipopolysaccharide to the outer membrane of the cell. This Bartonella henselae (strain ATCC 49882 / DSM 28221 / CCUG 30454 / Houston 1) (Rochalimaea henselae) protein is Acyl-[acyl-carrier-protein]--UDP-N-acetylglucosamine O-acyltransferase.